Consider the following 320-residue polypeptide: Cytochrome f (320 aa).

The N-terminal stretch at 1-35 is a signal peptide; it reads MQTRKTFSWIKEEITRSISVLLMIYIITWASISNA. Tyr36, Cys56, Cys59, and His60 together coordinate heme. A helical membrane pass occupies residues 286–306; it reads VQGLLFFLASVILAQIFLVLK.

The protein belongs to the cytochrome f family. In terms of assembly, the 4 large subunits of the cytochrome b6-f complex are cytochrome b6, subunit IV (17 kDa polypeptide, petD), cytochrome f and the Rieske protein, while the 4 small subunits are PetG, PetL, PetM and PetN. The complex functions as a dimer. Requires heme as cofactor.

It is found in the plastid. The protein resides in the chloroplast thylakoid membrane. In terms of biological role, component of the cytochrome b6-f complex, which mediates electron transfer between photosystem II (PSII) and photosystem I (PSI), cyclic electron flow around PSI, and state transitions. This is Cytochrome f from Manihot esculenta (Cassava).